The chain runs to 561 residues: Arginine--tRNA ligase (561 aa).

A 'HIGH' region motif is present at residues 136–146 (ANPTGLLHMGN).

This sequence belongs to the class-I aminoacyl-tRNA synthetase family. Monomer.

It is found in the cytoplasm. The enzyme catalyses tRNA(Arg) + L-arginine + ATP = L-arginyl-tRNA(Arg) + AMP + diphosphate. This Desulforamulus reducens (strain ATCC BAA-1160 / DSM 100696 / MI-1) (Desulfotomaculum reducens) protein is Arginine--tRNA ligase.